Here is a 436-residue protein sequence, read N- to C-terminus: Methionine aminopeptidase 2 (436 aa).

Residues 1-61 form a disordered region; sequence MSEIQPKTEV…KKKKAAPVAS (61 aa). A compositionally biased stretch (acidic residues) spans 16–26; that stretch reads EEEEESDDEED. Positions 44 to 56 are enriched in basic residues; sequence KKKKKKNKKKKKA. His191 is a binding site for substrate. A divalent metal cation contacts are provided by Asp211, Asp222, and His291. His299 is a substrate binding site. Glu324 and Glu417 together coordinate a divalent metal cation.

This sequence belongs to the peptidase M24A family. Methionine aminopeptidase eukaryotic type 2 subfamily. Requires Co(2+) as cofactor. The cofactor is Zn(2+). Mn(2+) is required as a cofactor. It depends on Fe(2+) as a cofactor.

The protein localises to the cytoplasm. It catalyses the reaction Release of N-terminal amino acids, preferentially methionine, from peptides and arylamides.. Functionally, cotranslationally removes the N-terminal methionine from nascent proteins. The N-terminal methionine is often cleaved when the second residue in the primary sequence is small and uncharged (Met-Ala-, Cys, Gly, Pro, Ser, Thr, or Val). This is Methionine aminopeptidase 2 (metap2) from Dictyostelium discoideum (Social amoeba).